The chain runs to 92 residues: RNA-binding protein Hfq (92 aa).

The Sm domain occupies 9-68; that stretch reads DPFLNALRRERVPVSIYLVNGIKLQGQVESFDQFVILLKNTVSQMVYKHAISTVVPARPF. The segment at 68–92 is disordered; sequence FNVSSHHNTPNQAAGYNASHDDSAE. A compositionally biased stretch (polar residues) spans 69–81; sequence NVSSHHNTPNQAA.

The protein belongs to the Hfq family. Homohexamer.

Functionally, RNA chaperone that binds small regulatory RNA (sRNAs) and mRNAs to facilitate mRNA translational regulation in response to envelope stress, environmental stress and changes in metabolite concentrations. Also binds with high specificity to tRNAs. The protein is RNA-binding protein Hfq of Shewanella loihica (strain ATCC BAA-1088 / PV-4).